A 293-amino-acid chain; its full sequence is Putative ABC transporter ATP-binding protein AF_0731 (293 aa).

Residues 2–236 enclose the ABC transporter domain; that stretch reads IEAVDLHFCY…RKLGIRSFSL (235 aa). 34 to 41 serves as a coordination point for ATP; it reads GRNGAGKT.

The protein belongs to the ABC transporter superfamily.

The protein localises to the cell membrane. Its function is as follows. Probably part of an ABC transporter complex. Responsible for energy coupling to the transport system. The polypeptide is Putative ABC transporter ATP-binding protein AF_0731 (Archaeoglobus fulgidus (strain ATCC 49558 / DSM 4304 / JCM 9628 / NBRC 100126 / VC-16)).